The primary structure comprises 400 residues: DDEADRLLKQGYTDLIERLHKQIPKITSDGCRLQMIVCSATLHAFEVKKMAERLMHFPTWGDLKGEDAVPETVHHVVCMVDPHTDSSWQQLRQPIHTDGVHDHDNVHPTNQSPETFSQAVKLLKGEYCIRAIDQHKMDRAIIFCRTKQDCDNLEQHLSQRGGQRFSCVCLHGDRKPQERKQNLEMFKRQEVKFLICTDVAARGLDITGLPFSKDLKYLSENTLNFPNLAVINITLPDDKSNYVHRIGRVGRPESMGLAISLVSTVPEKVWYHGEWCKTRGRSGSCIWYNEPNLLAEVEDHLNITIQQVVKSLDVPVNDFDGKVVYGQKNLNMGTGYEDHVEQLGPTVRKQTDLELQSQSLFLKRLKRLNWFDFGLLHDPKYFHGYEYIKYINKLTLKSCV.

A Helicase ATP-binding domain is found at 1 to 60 (DDEADRLLKQGYTDLIERLHKQIPKITSDGCRLQMIVCSATLHAFEVKKMAERLMHFPTW). Residues 2-5 (DEAD) carry the DEAD box motif. The Helicase C-terminal domain maps to 115–316 (TFSQAVKLLK…QVVKSLDVPV (202 aa)).

Belongs to the DEAD box helicase family. DDX1 subfamily.

The catalysed reaction is ATP + H2O = ADP + phosphate + H(+). Functionally, acts as an ATP-dependent RNA helicase, able to unwind both RNA-RNA and RNA-DNA duplexes. Possesses 5' single-stranded RNA overhang nuclease activity. This Drosophila virilis (Fruit fly) protein is ATP-dependent RNA helicase Ddx1 (Ddx1).